Here is a 177-residue protein sequence, read N- to C-terminus: Large ribosomal subunit protein uL6 (177 aa).

Belongs to the universal ribosomal protein uL6 family. In terms of assembly, part of the 50S ribosomal subunit.

Functionally, this protein binds to the 23S rRNA, and is important in its secondary structure. It is located near the subunit interface in the base of the L7/L12 stalk, and near the tRNA binding site of the peptidyltransferase center. The sequence is that of Large ribosomal subunit protein uL6 from Pseudoalteromonas atlantica (strain T6c / ATCC BAA-1087).